The sequence spans 341 residues: MSTTRTPKVSERVAPKPADPQPAKKKRGEDDDGPDFRTLLHAWLESHRASMADSLRRLGKQPIGSFFTCLVMAVALSMPMGLSLLLKNIEQLGGSWQRAAQISLFLKLDAGSRDGEALRDEIKGMPGVADAQYVSREQALEEFQQQSGLGEALRELPDNPLPGVVVVTPTEVDKPALEALRQRLSELPRVEVAQLDLVWVERLAAILKLGDRFVFGLAVMLISALLLVIGNTIRLHIENRRIEIEVIKLVGGTDAYVRRPFLYMGALYGLGAGLLAWGILAFGLNWLNEAVVGLSGLYGSDFALGGVPASDGLSLLIGAVLLGYIGAWIAVARHLNELAPR.

Positions Met-1–Pro-34 are disordered. The Cytoplasmic segment spans residues Met-1–Ser-65. The helical transmembrane segment at Phe-66–Leu-86 threads the bilayer. Over Lys-87–Arg-212 the chain is Periplasmic. Residues Phe-213–Ile-233 form a helical membrane-spanning segment. The Cytoplasmic portion of the chain corresponds to Arg-234–Tyr-263. The helical transmembrane segment at Met-264–Leu-284 threads the bilayer. At Asn-285–Asp-311 the chain is on the periplasmic side. A helical transmembrane segment spans residues Gly-312–Ala-332. At Arg-333–Arg-341 the chain is on the cytoplasmic side.

Belongs to the ABC-4 integral membrane protein family. FtsX subfamily. In terms of assembly, forms a membrane-associated complex with FtsE.

The protein resides in the cell inner membrane. Its function is as follows. Part of the ABC transporter FtsEX involved in cellular division. The chain is Cell division protein FtsX from Pseudomonas putida (Arthrobacter siderocapsulatus).